We begin with the raw amino-acid sequence, 421 residues long: NAD-specific glutamate dehydrogenase (421 aa).

2 residues coordinate substrate: Lys70 and Lys94. The active-site Proton donor is the Lys106. The NAD(+) site is built by Thr191 and Asn222. Ser355 contributes to the substrate binding site.

Belongs to the Glu/Leu/Phe/Val dehydrogenases family. In terms of assembly, homohexamer.

It carries out the reaction L-glutamate + NAD(+) + H2O = 2-oxoglutarate + NH4(+) + NADH + H(+). It functions in the pathway amino-acid degradation; L-glutamate degradation via hydroxyglutarate pathway; crotonoyl-CoA from L-glutamate: step 1/5. The polypeptide is NAD-specific glutamate dehydrogenase (Peptoniphilus asaccharolyticus (Peptostreptococcus asaccharolyticus)).